The chain runs to 162 residues: Lymphocyte antigen 86 (162 aa).

Positions 1–20 (MKGFTATLFLWTLIFPSCSG) are cleaved as a signal peptide. 3 disulfide bridges follow: cysteine 33–cysteine 58, cysteine 45–cysteine 154, and cysteine 102–cysteine 112. N-linked (GlcNAc...) asparagine glycosylation is present at asparagine 96. Asparagine 156 carries N-linked (GlcNAc...) asparagine glycosylation.

In terms of assembly, M-shaped tetramer of two CD180-LY86 heterodimers. As to expression, highly expressed in B-cells, monocytes and tonsil.

It is found in the secreted. The protein resides in the extracellular space. May cooperate with CD180 and TLR4 to mediate the innate immune response to bacterial lipopolysaccharide (LPS) and cytokine production. Important for efficient CD180 cell surface expression. This Homo sapiens (Human) protein is Lymphocyte antigen 86 (LY86).